The primary structure comprises 418 residues: Glycine betaine transport ATP-binding protein OpuAA (418 aa).

The 237-residue stretch at 34–270 (KTKKEILKAT…PSNEYVEKFV (237 aa)) folds into the ABC transporter domain. 66-73 (GLSGSGKS) serves as a coordination point for ATP. CBS domains follow at residues 284–340 (IMKR…DLSL) and 344–403 (LNTE…INAE).

Belongs to the ABC transporter superfamily. The complex is composed of two ATP-binding proteins (OpuAA), two transmembrane proteins (OpuAB) and a solute-binding protein (OpuAC).

It carries out the reaction a quaternary ammonium(out) + ATP + H2O = a quaternary ammonium(in) + ADP + phosphate + H(+). Involved in a multicomponent binding-protein-dependent transport system for glycine betaine. Probably responsible for energy coupling to the transport system. The sequence is that of Glycine betaine transport ATP-binding protein OpuAA (opuAA) from Bacillus subtilis (strain 168).